The primary structure comprises 388 residues: Probable pectin lyase F-1 (388 aa).

A signal peptide spans M1–A19. The cysteines at positions 80 and 103 are disulfide-linked. An N-linked (GlcNAc...) asparagine glycan is attached at N126. R253 is an active-site residue. A disulfide bridge links C328 with C336.

It belongs to the polysaccharide lyase 1 family.

The protein localises to the secreted. The enzyme catalyses Eliminative cleavage of (1-&gt;4)-alpha-D-galacturonan methyl ester to give oligosaccharides with 4-deoxy-6-O-methyl-alpha-D-galact-4-enuronosyl groups at their non-reducing ends.. Functionally, pectinolytic enzymes consist of four classes of enzymes: pectin lyase, polygalacturonase, pectin methylesterase and rhamnogalacturonase. Among pectinolytic enzymes, pectin lyase is the most important in depolymerization of pectin, since it cleaves internal glycosidic bonds of highly methylated pectins. The polypeptide is Probable pectin lyase F-1 (pelF-1) (Aspergillus terreus (strain NIH 2624 / FGSC A1156)).